The chain runs to 1829 residues: DNA polymerase (1829 aa).

2 consecutive DOD-type homing endonuclease domains span residues 527-668 (LSGI…SLGI) and 1136-1269 (FLGY…SLGV).

Belongs to the DNA polymerase type-B family. In terms of processing, this protein undergoes a protein self splicing that involves a post-translational excision of the three intervening regions (inteins) followed by peptide ligation.

The enzyme catalyses DNA(n) + a 2'-deoxyribonucleoside 5'-triphosphate = DNA(n+1) + diphosphate. In Thermococcus aggregans, this protein is DNA polymerase (pol).